Consider the following 219-residue polypeptide: Small ribosomal subunit protein uS5 (219 aa).

Residues 1 to 21 show a composition bias toward polar residues; that stretch reads MTDQNQKANQGNGLQTTNLQA. Residues 1–61 form a disordered region; sequence MTDQNQKANQ…NQNRRFQKPA (61 aa). Positions 35–47 are enriched in basic and acidic residues; it reads GIKKAVSKKEGGG. The region spanning 66 to 129 is the S5 DRBM domain; sequence FEERIVKLKR…KAAHNSLHTI (64 aa).

The protein belongs to the universal ribosomal protein uS5 family. Part of the 30S ribosomal subunit. Contacts proteins S4 and S8.

Functionally, with S4 and S12 plays an important role in translational accuracy. Its function is as follows. Located at the back of the 30S subunit body where it stabilizes the conformation of the head with respect to the body. This Mycoplasma pneumoniae (strain ATCC 29342 / M129 / Subtype 1) (Mycoplasmoides pneumoniae) protein is Small ribosomal subunit protein uS5.